We begin with the raw amino-acid sequence, 520 residues long: 2-isopropylmalate synthase (520 aa).

The Pyruvate carboxyltransferase domain maps to 12–274; sequence VLIFDTTLRD…TTGIDTTQIM (263 aa). The Mn(2+) site is built by D21, H209, H211, and N245. The segment at 398–520 is regulatory domain; the sequence is RLLSLTVIAG…RLHAQHAAAE (123 aa).

This sequence belongs to the alpha-IPM synthase/homocitrate synthase family. LeuA type 1 subfamily. As to quaternary structure, homodimer. It depends on Mn(2+) as a cofactor.

The protein localises to the cytoplasm. The enzyme catalyses 3-methyl-2-oxobutanoate + acetyl-CoA + H2O = (2S)-2-isopropylmalate + CoA + H(+). It functions in the pathway amino-acid biosynthesis; L-leucine biosynthesis; L-leucine from 3-methyl-2-oxobutanoate: step 1/4. Catalyzes the condensation of the acetyl group of acetyl-CoA with 3-methyl-2-oxobutanoate (2-ketoisovalerate) to form 3-carboxy-3-hydroxy-4-methylpentanoate (2-isopropylmalate). In Methylobacterium nodulans (strain LMG 21967 / CNCM I-2342 / ORS 2060), this protein is 2-isopropylmalate synthase.